Here is a 131-residue protein sequence, read N- to C-terminus: Small ribosomal subunit protein uS11 (131 aa).

This sequence belongs to the universal ribosomal protein uS11 family. As to quaternary structure, part of the 30S ribosomal subunit. Interacts with proteins S7 and S18. Binds to IF-3.

In terms of biological role, located on the platform of the 30S subunit, it bridges several disparate RNA helices of the 16S rRNA. Forms part of the Shine-Dalgarno cleft in the 70S ribosome. In Chromobacterium violaceum (strain ATCC 12472 / DSM 30191 / JCM 1249 / CCUG 213 / NBRC 12614 / NCIMB 9131 / NCTC 9757 / MK), this protein is Small ribosomal subunit protein uS11.